A 176-amino-acid chain; its full sequence is 3-hydroxydecanoyl-[acyl-carrier-protein] dehydratase (176 aa).

His-71 is an active-site residue.

Belongs to the thioester dehydratase family. FabA subfamily. In terms of assembly, homodimer.

Its subcellular location is the cytoplasm. The enzyme catalyses a (3R)-hydroxyacyl-[ACP] = a (2E)-enoyl-[ACP] + H2O. It carries out the reaction (3R)-hydroxydecanoyl-[ACP] = (2E)-decenoyl-[ACP] + H2O. The catalysed reaction is (2E)-decenoyl-[ACP] = (3Z)-decenoyl-[ACP]. Its pathway is lipid metabolism; fatty acid biosynthesis. Necessary for the introduction of cis unsaturation into fatty acids. Catalyzes the dehydration of (3R)-3-hydroxydecanoyl-ACP to E-(2)-decenoyl-ACP and then its isomerization to Z-(3)-decenoyl-ACP. Can catalyze the dehydratase reaction for beta-hydroxyacyl-ACPs with saturated chain lengths up to 16:0, being most active on intermediate chain length. This Rhodopseudomonas palustris (strain BisA53) protein is 3-hydroxydecanoyl-[acyl-carrier-protein] dehydratase.